The chain runs to 119 residues: Large ribosomal subunit protein uL14 (119 aa).

This sequence belongs to the universal ribosomal protein uL14 family. As to quaternary structure, part of the 50S ribosomal subunit. Forms a cluster with proteins L3 and L19. In the 70S ribosome, L14 and L19 interact and together make contacts with the 16S rRNA in bridges B5 and B8.

In terms of biological role, binds to 23S rRNA. Forms part of two intersubunit bridges in the 70S ribosome. In Wolbachia pipientis subsp. Culex pipiens (strain wPip), this protein is Large ribosomal subunit protein uL14.